We begin with the raw amino-acid sequence, 142 residues long: Large ribosomal subunit protein uL22c (142 aa).

This sequence belongs to the universal ribosomal protein uL22 family. Part of the 50S ribosomal subunit.

It is found in the plastid. The protein resides in the chloroplast. Its function is as follows. This protein binds specifically to 23S rRNA. Functionally, the globular domain of the protein is located near the polypeptide exit tunnel on the outside of the subunit, while an extended beta-hairpin is found that lines the wall of the exit tunnel in the center of the 70S ribosome. In Oenothera parviflora (Small-flowered evening primrose), this protein is Large ribosomal subunit protein uL22c (rpl22).